Reading from the N-terminus, the 61-residue chain is Photosystem II reaction center protein Z (61 aa).

Transmembrane regions (helical) follow at residues 5–25 (LTAL…VALA) and 38–58 (TKGF…DGVA).

This sequence belongs to the PsbZ family. PSII is composed of 1 copy each of membrane proteins PsbA, PsbB, PsbC, PsbD, PsbE, PsbF, PsbH, PsbI, PsbJ, PsbK, PsbL, PsbM, PsbT, PsbX, PsbY, PsbZ, Psb30/Ycf12, at least 3 peripheral proteins of the oxygen-evolving complex and a large number of cofactors. It forms dimeric complexes.

It is found in the plastid. It localises to the chloroplast thylakoid membrane. In terms of biological role, may control the interaction of photosystem II (PSII) cores with the light-harvesting antenna, regulates electron flow through the 2 photosystem reaction centers. PSII is a light-driven water plastoquinone oxidoreductase, using light energy to abstract electrons from H(2)O, generating a proton gradient subsequently used for ATP formation. The protein is Photosystem II reaction center protein Z of Phaeodactylum tricornutum (strain CCAP 1055/1).